The chain runs to 517 residues: Ribonuclease Y (517 aa).

A helical membrane pass occupies residues 1–21; it reads MIESLIALIAAIVGLGIGYLV. In terms of domain architecture, KH spans 207-273; the sequence is LINVINIKND…TKVIELLVED (67 aa). In terms of domain architecture, HD spans 333–426; that stretch reads ALAHSLEVAH…VCAADTLSAA (94 aa).

It belongs to the RNase Y family.

Its subcellular location is the cell membrane. Endoribonuclease that initiates mRNA decay. This is Ribonuclease Y from Campylobacter jejuni subsp. jejuni serotype O:23/36 (strain 81-176).